The primary structure comprises 540 residues: Glucose-6-phosphate isomerase (540 aa).

Glu-350 functions as the Proton donor in the catalytic mechanism. Catalysis depends on residues His-381 and Lys-503.

It belongs to the GPI family.

The protein localises to the cytoplasm. The enzyme catalyses alpha-D-glucose 6-phosphate = beta-D-fructose 6-phosphate. It participates in carbohydrate biosynthesis; gluconeogenesis. It functions in the pathway carbohydrate degradation; glycolysis; D-glyceraldehyde 3-phosphate and glycerone phosphate from D-glucose: step 2/4. Its function is as follows. Catalyzes the reversible isomerization of glucose-6-phosphate to fructose-6-phosphate. This Burkholderia pseudomallei (strain 668) protein is Glucose-6-phosphate isomerase.